A 532-amino-acid polypeptide reads, in one-letter code: Zinc metalloproteinase nas-29 (532 aa).

Positions methionine 1 to alanine 22 are cleaved as a signal peptide. Asparagine 5, asparagine 27, asparagine 70, and asparagine 106 each carry an N-linked (GlcNAc...) asparagine glycan. Residues glutamine 23–arginine 134 constitute a propeptide that is removed on maturation. The Peptidase M12A domain maps to glutamine 135–glutamine 335. Disulfide bonds link cysteine 179-cysteine 334, cysteine 201-cysteine 222, cysteine 338-cysteine 358, cysteine 360-cysteine 369, cysteine 380-cysteine 408, and cysteine 435-cysteine 456. Histidine 230 serves as a coordination point for Zn(2+). Residue glutamate 231 is part of the active site. Histidine 234 and histidine 240 together coordinate Zn(2+). Residues glutamine 330–glutamine 370 enclose the EGF-like domain. The 115-residue stretch at cysteine 380 to threonine 494 folds into the CUB domain. Asparagine 503 is a glycosylation site (N-linked (GlcNAc...) asparagine).

Zn(2+) is required as a cofactor.

Its subcellular location is the secreted. In terms of biological role, metalloprotease. This is Zinc metalloproteinase nas-29 (nas-29) from Caenorhabditis elegans.